A 35-amino-acid chain; its full sequence is GPIQISYNYNYGPCGRYCGILGVSPGDNLDCGNQR.

This sequence belongs to the glycosyl hydrolase 19 family. Chitinase class I subfamily.

It carries out the reaction Random endo-hydrolysis of N-acetyl-beta-D-glucosaminide (1-&gt;4)-beta-linkages in chitin and chitodextrins.. In terms of biological role, defense against chitin-containing fungal pathogens. This is Endochitinase 2 from Capsicum chinense (Scotch bonnet).